The following is a 120-amino-acid chain: Small ribosomal subunit protein eS24 (120 aa).

Residues 101-120 form a disordered region; the sequence is RDAGTKQKKGGSKGGQGAKG.

The protein belongs to the eukaryotic ribosomal protein eS24 family.

This is Small ribosomal subunit protein eS24 from Saccharolobus solfataricus (strain ATCC 35092 / DSM 1617 / JCM 11322 / P2) (Sulfolobus solfataricus).